The primary structure comprises 1139 residues: GRIP and coiled-coil domain-containing protein (1139 aa).

The tract at residues 366-388 (NDDSQINNNVSNKVNSPDDDPNT) is disordered. The segment covering 369 to 380 (SQINNNVSNKVN) has biased composition (polar residues). Coiled coils occupy residues 472–648 (VTKL…INNE) and 758–877 (LYIL…ETQQ). The segment at 1004 to 1024 (NEQENDNNNNNNNNNNNNNVE) is disordered. Positions 1009-1022 (DNNNNNNNNNNNNN) are enriched in low complexity. The stretch at 1043-1084 (YKKIRKKLETYEILLNEQQEGKKKMTEEINSLKNQVKNYESI) forms a coiled coil. The 52-residue stretch at 1084 to 1135 (INGNYQHIIYQKNILSNFIAQIPSRIQVDDYVSVIFNSFNFSNQEIEAINIK) folds into the GRIP domain.

This Plasmodium falciparum (isolate 3D7) protein is GRIP and coiled-coil domain-containing protein.